We begin with the raw amino-acid sequence, 456 residues long: MFLLLPFDSLIVNLLGISLTVLFTLLLVFIIVPAIFGVSFGIRKLYMKTLLKIFAWATLRMERGAKEKNHQLYKPYTNGIIAKDPTSLEEEIKEIRRSGSSKALDNTPEFELSDIFYFCRKGMETIMDDEVTKRFSAEELESWNLLSRTNYNFQYISLRLTVLWGLGVLIRYCFLLPLRIALAFTGISLLVVGTTVVGYLPNGRFKEFMSKHVHLMCYRICVRALTAIITYHDRENRPRNGGICVANHTSPIDVIILASDGYYAMVGQVHGGLMGVIQRAMVKACPHVWFERSEVKDRHLVAKRLTEHVQDKSKLPILIFPEGTCINNTSVMMFKKGSFEIGATVYPVAIKYDPQFGDAFWNSSKYGMVTYLLRMMTSWAIVCSVWYLPPMTREADEDAVQFANRVKSAIARQGGLVDLLWDGGLKREKVKDTFKEEQQKLYSKMIVGNHKDRSRS.

An N-terminal signal peptide occupies residues 1-37; it reads MFLLLPFDSLIVNLLGISLTVLFTLLLVFIIVPAIFG. 2 helical membrane passes run 156-176 and 180-200; these read ISLR…CFLL and IALA…VGYL. Asparagine 247 is a glycosylation site (N-linked (GlcNAc...) asparagine). Positions 248–253 match the HXXXXD motif motif; it reads HTSPID. N-linked (GlcNAc...) asparagine glycans are attached at residues asparagine 327, asparagine 328, and asparagine 362.

Belongs to the 1-acyl-sn-glycerol-3-phosphate acyltransferase family.

The protein localises to the endoplasmic reticulum membrane. It catalyses the reaction sn-glycerol 3-phosphate + an acyl-CoA = a 1-acyl-sn-glycero-3-phosphate + CoA. The enzyme catalyses dodecanoyl-CoA + sn-glycerol 3-phosphate = 1-dodecanoyl-sn-glycerol 3-phosphate + CoA. The catalysed reaction is sn-glycerol 3-phosphate + hexadecanoyl-CoA = 1-hexadecanoyl-sn-glycero-3-phosphate + CoA. It carries out the reaction sn-glycerol 3-phosphate + octadecanoyl-CoA = 1-octadecanoyl-sn-glycero-3-phosphate + CoA. It catalyses the reaction sn-glycerol 3-phosphate + (9Z)-octadecenoyl-CoA = 1-(9Z-octadecenoyl)-sn-glycero-3-phosphate + CoA. The enzyme catalyses (9Z,12Z)-octadecadienoyl-CoA + sn-glycerol 3-phosphate = 1-(9Z,12Z)-octadecadienoyl-sn-glycero-3-phosphate + CoA. It participates in phospholipid metabolism; CDP-diacylglycerol biosynthesis; CDP-diacylglycerol from sn-glycerol 3-phosphate: step 1/3. Functionally, converts glycerol-3-phosphate to 1-acyl-sn-glycerol-3-phosphate (lysophosphatidic acid or LPA) by incorporating an acyl moiety at the sn-1 position of the glycerol backbone. Active against both saturated and unsaturated long-chain fatty acyl-CoAs. Protects cells against lipotoxicity. The polypeptide is Glycerol-3-phosphate acyltransferase 4 (Pongo abelii (Sumatran orangutan)).